Reading from the N-terminus, the 268-residue chain is Pantothenate synthetase (268 aa).

18 to 25 is an ATP binding site; that stretch reads MGYLHEGH. His25 acts as the Proton donor in catalysis. Gln49 contributes to the (R)-pantoate binding site. Gln49 lines the beta-alanine pocket. 135-138 is a binding site for ATP; that stretch reads GQKD. Position 141 (Gln141) interacts with (R)-pantoate. ATP is bound by residues Ile164 and 172–175; that span reads LSSR.

Belongs to the pantothenate synthetase family. Homodimer.

It localises to the cytoplasm. It catalyses the reaction (R)-pantoate + beta-alanine + ATP = (R)-pantothenate + AMP + diphosphate + H(+). Its pathway is cofactor biosynthesis; (R)-pantothenate biosynthesis; (R)-pantothenate from (R)-pantoate and beta-alanine: step 1/1. Its function is as follows. Catalyzes the condensation of pantoate with beta-alanine in an ATP-dependent reaction via a pantoyl-adenylate intermediate. The polypeptide is Pantothenate synthetase (Dehalococcoides mccartyi (strain CBDB1)).